Reading from the N-terminus, the 248-residue chain is Enolase-phosphatase E1 (248 aa).

The Mg(2+) site is built by Asp14 and Glu16. Substrate-binding positions include 145 to 146 (SS) and Lys179. Asp204 serves as a coordination point for Mg(2+).

This sequence belongs to the HAD-like hydrolase superfamily. MasA/MtnC family. As to quaternary structure, monomer. Mg(2+) is required as a cofactor.

Its subcellular location is the cytoplasm. It is found in the nucleus. It carries out the reaction 5-methylsulfanyl-2,3-dioxopentyl phosphate + H2O = 1,2-dihydroxy-5-(methylsulfanyl)pent-1-en-3-one + phosphate. It functions in the pathway amino-acid biosynthesis; L-methionine biosynthesis via salvage pathway; L-methionine from S-methyl-5-thio-alpha-D-ribose 1-phosphate: step 3/6. Its pathway is amino-acid biosynthesis; L-methionine biosynthesis via salvage pathway; L-methionine from S-methyl-5-thio-alpha-D-ribose 1-phosphate: step 4/6. Bifunctional enzyme that catalyzes the enolization of 2,3-diketo-5-methylthiopentyl-1-phosphate (DK-MTP-1-P) into the intermediate 2-hydroxy-3-keto-5-methylthiopentenyl-1-phosphate (HK-MTPenyl-1-P), which is then dephosphorylated to form the acireductone 1,2-dihydroxy-3-keto-5-methylthiopentene (DHK-MTPene). This is Enolase-phosphatase E1 from Caenorhabditis elegans.